The chain runs to 201 residues: Small ribosomal subunit protein uS4 (201 aa).

Residues 93-156 enclose the S4 RNA-binding domain; it reads RRLDNMVYRL…KNLDIIKNAV (64 aa).

Belongs to the universal ribosomal protein uS4 family. Part of the 30S ribosomal subunit. Contacts protein S5. The interaction surface between S4 and S5 is involved in control of translational fidelity.

Its function is as follows. One of the primary rRNA binding proteins, it binds directly to 16S rRNA where it nucleates assembly of the body of the 30S subunit. With S5 and S12 plays an important role in translational accuracy. The polypeptide is Small ribosomal subunit protein uS4 (Limosilactobacillus reuteri subsp. reuteri (strain JCM 1112) (Lactobacillus reuteri)).